A 185-amino-acid polypeptide reads, in one-letter code: CASP-like protein 5A1 (185 aa).

Residues 1-45 are Cytoplasmic-facing; it reads MNVSHPAVHPVGVPPALGGHAVPPRMRMRVRMEYLVFQGMPLPGT. Residues 46 to 66 form a helical membrane-spanning segment; sequence LGGLVLRLGQFCSALIAFSVM. Over 67–76 the chain is Extracellular; the sequence is LSVRDFSVTA. A helical transmembrane segment spans residues 77-97; the sequence is FCYLVAATVLQCLWSLAMAVI. Residues 98–121 are Cytoplasmic-facing; the sequence is DVYALLVKRSLRNPLLVSIFVVGD. A helical transmembrane segment spans residues 122–142; it reads GVTATLTFAAACASAGVIVLI. The Extracellular segment spans residues 143 to 160; that stretch reads GNDIAMCKDNPCANYEAA. A helical transmembrane segment spans residues 161–181; it reads IIMAFLSWFMVSISFILTFWL. Residues 182 to 185 are Cytoplasmic-facing; that stretch reads LATL.

This sequence belongs to the Casparian strip membrane proteins (CASP) family. Homodimer and heterodimers.

The protein localises to the cell membrane. This is CASP-like protein 5A1 from Picea sitchensis (Sitka spruce).